A 35-amino-acid chain; its full sequence is Photosystem II reaction center protein Psb30 (35 aa).

A helical transmembrane segment spans residues V6–Y26.

The protein belongs to the Psb30/Ycf12 family. As to quaternary structure, PSII is composed of 1 copy each of membrane proteins PsbA, PsbB, PsbC, PsbD, PsbE, PsbF, PsbH, PsbI, PsbJ, PsbK, PsbL, PsbM, PsbT, PsbY, PsbZ, Psb30/Ycf12, peripheral proteins of the oxygen-evolving complex and a large number of cofactors. It forms dimeric complexes.

The protein resides in the plastid. The protein localises to the chloroplast thylakoid membrane. A core subunit of photosystem II (PSII), probably helps stabilize the reaction center. In Cyanidium caldarium (Red alga), this protein is Photosystem II reaction center protein Psb30.